The following is a 167-amino-acid chain: Calcium-binding protein CML19 (167 aa).

EF-hand domains follow at residues 23–58 (QKRR…LGFE), 59–94 (MNNQ…KFGE), 96–131 (DSID…LGEN), and 132–167 (FTDN…TSYG). Residues aspartate 36, aspartate 38, serine 40, serine 42, glutamate 47, aspartate 72, asparagine 74, serine 76, glutamate 83, aspartate 109, aspartate 111, asparagine 113, lysine 115, aspartate 120, aspartate 145, aspartate 147, aspartate 149, glutamate 151, and glutamate 156 each contribute to the Ca(2+) site.

It belongs to the centrin family. Interacts with RAD4. Calcium is required for this interaction. Interacts with SAC3B. Expressed in leaves, roots, and at lower level in stems. Barely detectable in flower buds and flowers.

The protein localises to the cytoplasm. Its subcellular location is the nucleus. Potential calcium sensor that binds calcium in vitro. Modulates homologous recombination and nucleotide excision repair (NER). Involved in the early response to UV irradiation. The sequence is that of Calcium-binding protein CML19 from Arabidopsis thaliana (Mouse-ear cress).